Reading from the N-terminus, the 339-residue chain is Tetraacyldisaccharide 4'-kinase (339 aa).

An ATP-binding site is contributed by 61 to 68 (TAGGTGKT).

The protein belongs to the LpxK family.

The catalysed reaction is a lipid A disaccharide + ATP = a lipid IVA + ADP + H(+). The protein operates within glycolipid biosynthesis; lipid IV(A) biosynthesis; lipid IV(A) from (3R)-3-hydroxytetradecanoyl-[acyl-carrier-protein] and UDP-N-acetyl-alpha-D-glucosamine: step 6/6. In terms of biological role, transfers the gamma-phosphate of ATP to the 4'-position of a tetraacyldisaccharide 1-phosphate intermediate (termed DS-1-P) to form tetraacyldisaccharide 1,4'-bis-phosphate (lipid IVA). The chain is Tetraacyldisaccharide 4'-kinase from Stenotrophomonas maltophilia (strain R551-3).